Consider the following 287-residue polypeptide: Nucleotide-binding protein VP2673 (287 aa).

Position 8–15 (8–15) interacts with ATP; sequence GHSGAGKS. 56–59 serves as a coordination point for GTP; that stretch reads DIRN.

This sequence belongs to the RapZ-like family.

Functionally, displays ATPase and GTPase activities. This chain is Nucleotide-binding protein VP2673, found in Vibrio parahaemolyticus serotype O3:K6 (strain RIMD 2210633).